The following is a 437-amino-acid chain: Minor fimbrial subunit HifE (437 aa).

Positions 1–30 (MNKKSYINHYLTLFKVTTLLFTLSSNPVWA) are cleaved as a signal peptide.

It belongs to the fimbrial protein family.

The protein resides in the fimbrium. May be a minor structural protein required for pilus biogenesis. May be the adhesive component in the pili. This chain is Minor fimbrial subunit HifE (hifE), found in Haemophilus influenzae.